The following is a 292-amino-acid chain: Triplex capsid protein 2 (292 aa).

Belongs to the herpesviridae TRX2 protein family. Interacts with TRX1 and major capisd protein/MCP.

The protein resides in the virion. Its subcellular location is the host nucleus. In terms of biological role, structural component of the T=16 icosahedral capsid. The capsid is composed of pentamers and hexamers of major capsid protein/MCP, which are linked together by heterotrimers called triplexes. These triplexes are formed by a single molecule of triplex protein 1/TRX1 and two copies of triplex protein 2/TRX2. Additionally, TRX1 is required for efficient transport of TRX2 to the nucleus, which is the site of capsid assembly. The chain is Triplex capsid protein 2 from Elephas maximus (Indian elephant).